A 282-amino-acid chain; its full sequence is NADPH-dependent 7-cyano-7-deazaguanine reductase (282 aa).

Residue 90–92 coordinates substrate; that stretch reads IES. An NADPH-binding site is contributed by 92–93; sequence SK. Cys-190 acts as the Thioimide intermediate in catalysis. Asp-197 functions as the Proton donor in the catalytic mechanism. Residue 229–230 participates in substrate binding; it reads HE. 258 to 259 lines the NADPH pocket; sequence RG.

It belongs to the GTP cyclohydrolase I family. QueF type 2 subfamily. As to quaternary structure, homodimer.

The protein resides in the cytoplasm. It catalyses the reaction 7-aminomethyl-7-carbaguanine + 2 NADP(+) = 7-cyano-7-deazaguanine + 2 NADPH + 3 H(+). Its pathway is tRNA modification; tRNA-queuosine biosynthesis. In terms of biological role, catalyzes the NADPH-dependent reduction of 7-cyano-7-deazaguanine (preQ0) to 7-aminomethyl-7-deazaguanine (preQ1). The sequence is that of NADPH-dependent 7-cyano-7-deazaguanine reductase from Aeromonas salmonicida (strain A449).